A 389-amino-acid polypeptide reads, in one-letter code: Lipid-A-disaccharide synthase (389 aa).

This sequence belongs to the LpxB family.

It carries out the reaction a lipid X + a UDP-2-N,3-O-bis[(3R)-3-hydroxyacyl]-alpha-D-glucosamine = a lipid A disaccharide + UDP + H(+). The protein operates within bacterial outer membrane biogenesis; LPS lipid A biosynthesis. Condensation of UDP-2,3-diacylglucosamine and 2,3-diacylglucosamine-1-phosphate to form lipid A disaccharide, a precursor of lipid A, a phosphorylated glycolipid that anchors the lipopolysaccharide to the outer membrane of the cell. The polypeptide is Lipid-A-disaccharide synthase (Paraburkholderia xenovorans (strain LB400)).